Here is a 356-residue protein sequence, read N- to C-terminus: MLPNQILTDITTVKHSFKAETFRPISTLSLSRNLSVSKFVPCLSKENKRDVLETIAKEFSNIEGEEFFVLPLKDLPIWQRECLLEHYLCPYDLSGSLEGEALIVNRAGTLLAGINLRDHLVLHGIDFVWQPEMLLQKLIDLDIRLQQSLSFAFSPDFGFLTTDPLRCGTALVARAFIHVPALRYRNKLSELLVPHQREFACSSLLPLSQESLGDILCLSNICSLGVSEEQILSSLRLVVSKILSAETEARNLLLKENSTEIKNRILRSIGMLTHSCYLDLQEALDATSWIQLGMSMQWIEDSEKHPLWSPMFWDLRRGHLALYNQDPANKTIEKEIIAQIRAQTTKPQAERLILRV.

Residues 22 to 249 form the Phosphagen kinase C-terminal domain; sequence FRPISTLSLS…SKILSAETEA (228 aa). ATP contacts are provided by residues 25–29, 172–176, and 202–207; these read ISTLS, VARAF, and SSLLPL.

It belongs to the ATP:guanido phosphotransferase family.

The enzyme catalyses L-arginyl-[protein] + ATP = N(omega)-phospho-L-arginyl-[protein] + ADP + H(+). Functionally, catalyzes the specific phosphorylation of arginine residues in proteins. The protein is Protein-arginine kinase of Chlamydia muridarum (strain MoPn / Nigg).